Consider the following 518-residue polypeptide: Ent-cassadiene hydroxylase (518 aa).

A helical membrane pass occupies residues 6-26; the sequence is LILALGLSVLFVLLSKLVSSA. Residue cysteine 451 participates in heme binding.

Belongs to the cytochrome P450 family. Heme serves as cofactor.

It is found in the membrane. The enzyme catalyses ent-cassa-12,15-diene + 3 reduced [NADPH--hemoprotein reductase] + 3 O2 = ent-3beta-hydroxycassa-12,15-dien-2-one + 3 oxidized [NADPH--hemoprotein reductase] + 4 H2O + 3 H(+). Enzyme of the diterpenoid metabolism involved in the biosynthesis of antibacterial oryzalides such as phytocassane. Catalyzes the hydroxylation of ent-cassa-12,15-diene to form ent-3beta-hydroxycassa-12,15-dien-2-one. The chain is Ent-cassadiene hydroxylase (CYP71Z7) from Oryza sativa subsp. japonica (Rice).